A 325-amino-acid chain; its full sequence is Eukaryotic translation initiation factor 3 subunit I (325 aa).

WD repeat units lie at residues 8-47 (GHERSITQIKYNREGDLLFTVAKDPIVNVWYSVNGERLGT), 50-89 (GHTGAVWCVDADWDTRHVLTGSADNSCRLWDCETGKQLAL), 144-183 (CSDSKITSAVWGPLGEFIIAGHENGELNQFSAKSGEQLSN), 186-225 (EHTKQINDIQTSRDMTMFITASKDNTAKLFDCTSLKHLKT), and 283-324 (GHFG…FEFE).

Belongs to the eIF-3 subunit I family. As to quaternary structure, component of the eukaryotic translation initiation factor 3 (eIF-3) complex, which is composed of 13 subunits: EIF3A, EIF3B, EIF3C, EIF3D, EIF3E, EIF3F, EIF3G, EIF3H, EIF3I, EIF3J, EIF3K, EIF3L and EIF3M.

The protein resides in the cytoplasm. In terms of biological role, component of the eukaryotic translation initiation factor 3 (eIF-3) complex, which is involved in protein synthesis of a specialized repertoire of mRNAs and, together with other initiation factors, stimulates binding of mRNA and methionyl-tRNAi to the 40S ribosome. The eIF-3 complex specifically targets and initiates translation of a subset of mRNAs involved in cell proliferation. In Taeniopygia guttata (Zebra finch), this protein is Eukaryotic translation initiation factor 3 subunit I.